We begin with the raw amino-acid sequence, 365 residues long: MDNYEFSELLKTLKNKVGNIASIIKPENIQTRLKEIEELENSPSFWSDVKQAGIIGKEKTKITNLLKNYENAFNALNDANELFDLANSENDTETLEALFNDASKLEDTITSLEISMLLSGENDGKNAIVSIHPGAGGTESNDWASILYRMYLRFCEREGFKVETLDFQEGEEAGLKDVSFLVKGENAYGYLKAENGIHRLVRTSPFDSAGRRHTSFSSVMVSPELDDDIEIEIEEKDIRIDYYRASGAGGQHVNKTESAVRITHFPTGIVVQCQNDRSQHKNKATAFKMLKSRLYELELMKQQDSANTGEKSEIGWGHQIRSYVLFPYQQVKDNRSGEAFSQVDNILDGDIKKMIEGVLIALKAE.

Gln-251 is subject to N5-methylglutamine.

This sequence belongs to the prokaryotic/mitochondrial release factor family. Post-translationally, methylated by PrmC. Methylation increases the termination efficiency of RF2.

The protein localises to the cytoplasm. Its function is as follows. Peptide chain release factor 2 directs the termination of translation in response to the peptide chain termination codons UGA and UAA. This is Peptide chain release factor 2 from Campylobacter jejuni subsp. jejuni serotype O:23/36 (strain 81-176).